A 37-amino-acid chain; its full sequence is Large ribosomal subunit protein bL36 (37 aa).

This sequence belongs to the bacterial ribosomal protein bL36 family.

The polypeptide is Large ribosomal subunit protein bL36 (Salinispora arenicola (strain CNS-205)).